Here is an 89-residue protein sequence, read N- to C-terminus: Small ribosomal subunit protein uS15 (89 aa).

It belongs to the universal ribosomal protein uS15 family. Part of the 30S ribosomal subunit. Forms a bridge to the 50S subunit in the 70S ribosome, contacting the 23S rRNA.

Its function is as follows. One of the primary rRNA binding proteins, it binds directly to 16S rRNA where it helps nucleate assembly of the platform of the 30S subunit by binding and bridging several RNA helices of the 16S rRNA. In terms of biological role, forms an intersubunit bridge (bridge B4) with the 23S rRNA of the 50S subunit in the ribosome. This is Small ribosomal subunit protein uS15 from Burkholderia mallei (strain NCTC 10247).